We begin with the raw amino-acid sequence, 407 residues long: Phosphopentomutase (407 aa).

Mn(2+) contacts are provided by D11, D305, H310, D346, H347, and H358.

Belongs to the phosphopentomutase family. Mn(2+) is required as a cofactor.

The protein localises to the cytoplasm. The catalysed reaction is 2-deoxy-alpha-D-ribose 1-phosphate = 2-deoxy-D-ribose 5-phosphate. The enzyme catalyses alpha-D-ribose 1-phosphate = D-ribose 5-phosphate. Its pathway is carbohydrate degradation; 2-deoxy-D-ribose 1-phosphate degradation; D-glyceraldehyde 3-phosphate and acetaldehyde from 2-deoxy-alpha-D-ribose 1-phosphate: step 1/2. In terms of biological role, isomerase that catalyzes the conversion of deoxy-ribose 1-phosphate (dRib-1-P) and ribose 1-phosphate (Rib-1-P) to deoxy-ribose 5-phosphate (dRib-5-P) and ribose 5-phosphate (Rib-5-P), respectively. This chain is Phosphopentomutase, found in Legionella pneumophila (strain Lens).